The following is a 492-amino-acid chain: Catalase isozyme 2 (492 aa).

Active-site residues include His65 and Asn138. Tyr348 contributes to the heme binding site.

Belongs to the catalase family. In terms of assembly, homotetramer. The cofactor is heme.

The protein localises to the peroxisome. The catalysed reaction is 2 H2O2 = O2 + 2 H2O. Occurs in almost all aerobically respiring organisms and serves to protect cells from the toxic effects of hydrogen peroxide. The protein is Catalase isozyme 2 (CAT2) of Solanum lycopersicum (Tomato).